Here is a 246-residue protein sequence, read N- to C-terminus: 4-hydroxy-tetrahydrodipicolinate reductase (246 aa).

Residues 8-13 (GALGRM), aspartate 34, 74-76 (GTT), and 101-104 (APNF) each bind NAD(+). Histidine 131 (proton donor/acceptor) is an active-site residue. Histidine 132 lines the (S)-2,3,4,5-tetrahydrodipicolinate pocket. The active-site Proton donor is the lysine 135. Position 141-142 (141-142 (GT)) interacts with (S)-2,3,4,5-tetrahydrodipicolinate.

This sequence belongs to the DapB family.

The protein resides in the cytoplasm. The enzyme catalyses (S)-2,3,4,5-tetrahydrodipicolinate + NAD(+) + H2O = (2S,4S)-4-hydroxy-2,3,4,5-tetrahydrodipicolinate + NADH + H(+). It catalyses the reaction (S)-2,3,4,5-tetrahydrodipicolinate + NADP(+) + H2O = (2S,4S)-4-hydroxy-2,3,4,5-tetrahydrodipicolinate + NADPH + H(+). The protein operates within amino-acid biosynthesis; L-lysine biosynthesis via DAP pathway; (S)-tetrahydrodipicolinate from L-aspartate: step 4/4. Its function is as follows. Catalyzes the conversion of 4-hydroxy-tetrahydrodipicolinate (HTPA) to tetrahydrodipicolinate. This chain is 4-hydroxy-tetrahydrodipicolinate reductase, found in Thermobifida fusca (strain YX).